Here is a 183-residue protein sequence, read N- to C-terminus: MVLFILVLYTCIQDGNGLLCGYISFSNTPMTSAKCWIGTVCFSIPCSFLVHFHCSSLHLFSNCFLHRSFSPHLMPRTSISTLGQLFEPTITHNGIPMACDNFILAPIPSFSLNWSRMSFCKFCMVGSFSSSDLTSCNLCEFSGLFGPVQIDTLYGAIIAGHLNPLESRPSSAIAPTSLLTPMP.

A signal peptide spans 1-17 (MVLFILVLYTCIQDGNG).

This is an uncharacterized protein from Saccharomyces cerevisiae (strain ATCC 204508 / S288c) (Baker's yeast).